A 130-amino-acid polypeptide reads, in one-letter code: Small ribosomal subunit protein uS8 (130 aa).

It belongs to the universal ribosomal protein uS8 family. In terms of assembly, part of the 30S ribosomal subunit. Contacts proteins S5 and S12.

One of the primary rRNA binding proteins, it binds directly to 16S rRNA central domain where it helps coordinate assembly of the platform of the 30S subunit. This Erwinia tasmaniensis (strain DSM 17950 / CFBP 7177 / CIP 109463 / NCPPB 4357 / Et1/99) protein is Small ribosomal subunit protein uS8.